The following is a 311-amino-acid chain: MRKIIVGSRRSKLALTQTNWVIERLRQLGAPFEFEVKEIVTKGDKIIDVTLSKVGGKGLFVKEIEHAMLNGEIDMAVHSMKDMPAVLPDGLIIGCVPPREDHHDVLISKNKETFANLPSGAIVGTSSLRRSAQILAKRPDLKIKWIRGNIDTRLAKLQNEDYDAIILAAAGLVRMGWARDVITEYLSTDVCLPAVGQGALAVECRENDEELREWLQKLNDVHTERAVLAERVFLQQMEGGCQVPIAGYAYIDDREDIVLTALVASPDGKEIYKETVSGSNPEEVGTNAAKMLIERGAKALIDRIKEEMNRQ.

Cysteine 241 is subject to S-(dipyrrolylmethanemethyl)cysteine.

Belongs to the HMBS family. Monomer. Dipyrromethane serves as cofactor.

The enzyme catalyses 4 porphobilinogen + H2O = hydroxymethylbilane + 4 NH4(+). The protein operates within porphyrin-containing compound metabolism; protoporphyrin-IX biosynthesis; coproporphyrinogen-III from 5-aminolevulinate: step 2/4. Tetrapolymerization of the monopyrrole PBG into the hydroxymethylbilane pre-uroporphyrinogen in several discrete steps. In Geobacillus sp. (strain WCH70), this protein is Porphobilinogen deaminase.